Reading from the N-terminus, the 261-residue chain is Cobalt transport protein CbiM (261 aa).

Positions 1-33 (MLRRVLASKRASLILMGMLSFYIIVSASAPAYA) are cleaved as a signal peptide. 7 consecutive transmembrane segments (helical) span residues 41–61 (LPAGWAAFWWLVALPFMLLGV), 76–96 (LLLALAGAFTFVLSALKLPSV), 108–128 (LGSVLFGPLAMSVLGSLVLLF), 140–160 (TLGANAFSMAIAGPFAAYWIY), 172–192 (IAIFLAATLADLLTYIITSVQ), 197–217 (FPAPVGGFIASFAKFAGIFAI), and 220–240 (IPLAISEGLLTVLVWNWLQSY).

Belongs to the CbiM family. Forms an energy-coupling factor (ECF) transporter complex composed of an ATP-binding protein (A component, CbiO), a transmembrane protein (T component, CbiQ) and 2 possible substrate-capture proteins (S components, CbiM and CbiN) of unknown stoichimetry.

Its subcellular location is the cell inner membrane. The protein operates within cofactor biosynthesis; adenosylcobalamin biosynthesis. In terms of biological role, part of the energy-coupling factor (ECF) transporter complex CbiMNOQ involved in cobalt import. The polypeptide is Cobalt transport protein CbiM (Nostoc sp. (strain PCC 7120 / SAG 25.82 / UTEX 2576)).